Reading from the N-terminus, the 196-residue chain is Segregation and condensation protein B (196 aa).

Belongs to the ScpB family. Homodimer. Homodimerization may be required to stabilize the binding of ScpA to the Smc head domains. Component of a cohesin-like complex composed of ScpA, ScpB and the Smc homodimer, in which ScpA and ScpB bind to the head domain of Smc. The presence of the three proteins is required for the association of the complex with DNA.

The protein localises to the cytoplasm. Functionally, participates in chromosomal partition during cell division. May act via the formation of a condensin-like complex containing Smc and ScpA that pull DNA away from mid-cell into both cell halves. The polypeptide is Segregation and condensation protein B (Lactobacillus johnsonii (strain CNCM I-12250 / La1 / NCC 533)).